The primary structure comprises 190 residues: Vespryn-21 (190 aa).

The first 20 residues, 1–20 (MLLFTLCFFADLENGGKALA), serve as a signal peptide directing secretion. The B30.2/SPRY domain maps to 21 to 127 (SPPGKWQKAD…LIWQRGLWFL (107 aa)). The propeptide occupies 128–190 (QRLETDSDKL…LGGGVSLTNL (63 aa)).

It belongs to the ohanin/vespryn family. As to expression, expressed by the venom gland.

The protein localises to the secreted. In terms of biological role, neurotoxin that produces dose-dependent hypolocomotion and hyperalgesia in mice. May directly act on the central nervous system, as it is 6500-fold more potent when administered intracerebroventricularly than intraperitoneal. The polypeptide is Vespryn-21 (Drysdalia coronoides (White-lipped snake)).